A 217-amino-acid polypeptide reads, in one-letter code: ATP phosphoribosyltransferase (217 aa).

This sequence belongs to the ATP phosphoribosyltransferase family. Short subfamily. As to quaternary structure, heteromultimer composed of HisG and HisZ subunits.

Its subcellular location is the cytoplasm. The enzyme catalyses 1-(5-phospho-beta-D-ribosyl)-ATP + diphosphate = 5-phospho-alpha-D-ribose 1-diphosphate + ATP. It participates in amino-acid biosynthesis; L-histidine biosynthesis; L-histidine from 5-phospho-alpha-D-ribose 1-diphosphate: step 1/9. Catalyzes the condensation of ATP and 5-phosphoribose 1-diphosphate to form N'-(5'-phosphoribosyl)-ATP (PR-ATP). Has a crucial role in the pathway because the rate of histidine biosynthesis seems to be controlled primarily by regulation of HisG enzymatic activity. This Burkholderia orbicola (strain AU 1054) protein is ATP phosphoribosyltransferase.